The chain runs to 91 residues: DNA-directed RNA polymerase subunit omega (91 aa).

This sequence belongs to the RNA polymerase subunit omega family. As to quaternary structure, the RNAP catalytic core consists of 2 alpha, 1 beta, 1 beta' and 1 omega subunit. When a sigma factor is associated with the core the holoenzyme is formed, which can initiate transcription.

The enzyme catalyses RNA(n) + a ribonucleoside 5'-triphosphate = RNA(n+1) + diphosphate. Promotes RNA polymerase assembly. Latches the N- and C-terminal regions of the beta' subunit thereby facilitating its interaction with the beta and alpha subunits. This Pectobacterium carotovorum subsp. carotovorum (strain PC1) protein is DNA-directed RNA polymerase subunit omega.